Consider the following 325-residue polypeptide: Phospholipid phosphatase-related protein type 1 (325 aa).

The N-linked (GlcNAc...) asparagine glycan is linked to Asn5. 3 consecutive transmembrane segments (helical) span residues 13-33 (IIPC…LLAY), 67-87 (FISP…IIFI), and 127-147 (FIGV…AGQV). A glycan (N-linked (GlcNAc...) asparagine) is linked at Asn163. Helical transmembrane passes span 201–218 (AALS…ITST), 230–247 (VLCL…LNRV), and 257–277 (VIAG…CVVH). A Phosphoserine modification is found at Ser307. Asn316 is a glycosylation site (N-linked (GlcNAc...) asparagine).

Belongs to the PA-phosphatase related phosphoesterase family.

It localises to the cell membrane. The protein localises to the cell projection. Its subcellular location is the neuron projection. In terms of biological role, may play a role in neurite outgrowth and neurogenesis. In Mus musculus (Mouse), this protein is Phospholipid phosphatase-related protein type 1.